We begin with the raw amino-acid sequence, 676 residues long: Urocanate hydratase (676 aa).

Residues Gly-126–Gly-127, Gln-204, Gly-251–Ser-253, Glu-271, Asn-317–Val-318, Gln-343–His-347, Tyr-354–Tyr-355, and Tyr-403 each bind NAD(+). Lys-534 carries the N6-succinyllysine modification. Gly-594 contacts NAD(+).

It belongs to the urocanase family. The cofactor is NAD(+).

It carries out the reaction 4-imidazolone-5-propanoate = trans-urocanate + H2O. It functions in the pathway amino-acid degradation; L-histidine degradation into L-glutamate; N-formimidoyl-L-glutamate from L-histidine: step 2/3. The chain is Urocanate hydratase (Uroc1) from Mus musculus (Mouse).